The chain runs to 79 residues: Beta-defensin 15 (79 aa).

The signal sequence occupies residues M1–A20. 3 disulfide bridges follow: C26–C53, C33–C47, and C37–C54.

This sequence belongs to the beta-defensin family.

It localises to the secreted. Its function is as follows. Has antibacterial activity. This is Beta-defensin 15 (Defb15) from Rattus norvegicus (Rat).